The chain runs to 141 residues: S-adenosylmethionine decarboxylase proenzyme (141 aa).

S63 functions as the Schiff-base intermediate with substrate; via pyruvic acid in the catalytic mechanism. Position 63 is a pyruvic acid (Ser); by autocatalysis (S63). The active-site Proton acceptor; for processing activity is H68. C83 functions as the Proton donor; for catalytic activity in the catalytic mechanism.

It belongs to the prokaryotic AdoMetDC family. Type 1 subfamily. In terms of assembly, heterotetramer of two alpha and two beta chains arranged as a dimer of alpha/beta heterodimers. It depends on pyruvate as a cofactor. Is synthesized initially as an inactive proenzyme. Formation of the active enzyme involves a self-maturation process in which the active site pyruvoyl group is generated from an internal serine residue via an autocatalytic post-translational modification. Two non-identical subunits are generated from the proenzyme in this reaction, and the pyruvate is formed at the N-terminus of the alpha chain, which is derived from the carboxyl end of the proenzyme. The post-translation cleavage follows an unusual pathway, termed non-hydrolytic serinolysis, in which the side chain hydroxyl group of the serine supplies its oxygen atom to form the C-terminus of the beta chain, while the remainder of the serine residue undergoes an oxidative deamination to produce ammonia and the pyruvoyl group blocking the N-terminus of the alpha chain.

It catalyses the reaction S-adenosyl-L-methionine + H(+) = S-adenosyl 3-(methylsulfanyl)propylamine + CO2. It participates in amine and polyamine biosynthesis; S-adenosylmethioninamine biosynthesis; S-adenosylmethioninamine from S-adenosyl-L-methionine: step 1/1. Functionally, catalyzes the decarboxylation of S-adenosylmethionine to S-adenosylmethioninamine (dcAdoMet), the propylamine donor required for the synthesis of the polyamines spermine and spermidine from the diamine putrescine. The protein is S-adenosylmethionine decarboxylase proenzyme of Thermococcus onnurineus (strain NA1).